Here is an 877-residue protein sequence, read N- to C-terminus: Probable Ras GTPase-activating-like protein ngap (877 aa).

The C2 domain maps to 72 to 218 (TPSATYESLI…KDQKERELWF (147 aa)). The segment at 350-456 (SDDGDISGLK…ETINLSSSIN (107 aa)) is disordered. The segment covering 389–409 (TTATTTPSSTPSTPISPSSQS) has biased composition (low complexity). A compositionally biased stretch (polar residues) spans 410 to 425 (NNIKTPDSKTRSSSNA). Composition is skewed to low complexity over residues 426-438 (STNT…KSTG) and 447-456 (ETINLSSSIN). Positions 591–802 (GKCLYLLKSL…ENMKSFINTL (212 aa)) constitute a Ras-GAP domain. The stretch at 820–848 (LEKELACLYRHLIKQRQDMAEEMESTESE) forms a coiled coil.

In terms of biological role, may function as a Ras GTPase-activating protein. The protein is Probable Ras GTPase-activating-like protein ngap (ngap) of Dictyostelium discoideum (Social amoeba).